A 346-amino-acid chain; its full sequence is fMet-Leu-Phe receptor (346 aa).

Residues asparagine 1 and asparagine 7 are each glycosylated (N-linked (GlcNAc...) asparagine). The Extracellular segment spans residues 1 to 24 (NSSLPTNISGGTPAVSAGYLFLDI). The helical transmembrane segment at 25–47 (ITYLVFAVTFVLGVLGNGLVIWV) threads the bilayer. Residues 48-58 (AGFRMRHTVTT) are Cytoplasmic-facing. A helical membrane pass occupies residues 59 to 80 (ISYLNLAVADFCFTSTLPFLMV). Residues 81–97 (VKVMRGHWPFGWFLCKF) are Extracellular-facing. Residues cysteine 95 and cysteine 173 are joined by a disulfide bond. Residues 98–118 (IFTIVDINLFGSVFLIALIAL) form a helical membrane-spanning segment. Topologically, residues 119 to 137 (DRCVCVLHPVWTQNHRTVS) are cytoplasmic. Residues 138–159 (LAKKVIIGPWVMALLLTLPVII) traverse the membrane as a helical segment. Topologically, residues 160-202 (RVTTVPGKTGTVACTFDFSPWTNDPVEKLKVTIAMLTVRGIIR) are extracellular. Residues 203 to 223 (FIIGFSVPMSIVAVSYGLIAT) traverse the membrane as a helical segment. Residues 224-239 (KIHKQGLIKSSRPLRV) are Cytoplasmic-facing. A helical transmembrane segment spans residues 240 to 263 (LSFVVAAFFLCWSPYQVVAFIATV). At 264–282 (RLRNILQGLSKELRIAVDA) the chain is on the extracellular side. Residues 283-302 (TSALAFFNSCLNPMLYVFMG) traverse the membrane as a helical segment. Topologically, residues 303 to 346 (QDFRERLIHSLPTSLERALTEDSAQTSDTATNSTLPSAEVPLQA) are cytoplasmic. The disordered stretch occupies residues 321 to 346 (LTEDSAQTSDTATNSTLPSAEVPLQA). Over residues 324–338 (DSAQTSDTATNSTLP) the composition is skewed to polar residues.

Belongs to the G-protein coupled receptor 1 family. Phosphorylated; which is necessary for desensitization.

It is found in the cell membrane. High affinity receptor for N-formyl-methionyl peptides (fMLP), which are powerful neutrophil chemotactic factors. Binding of fMLP to the receptor stimulates intracellular calcium mobilization and superoxide anion release. This response is mediated via a G-protein that activates a phosphatidylinositol-calcium second messenger system. Receptor for TAFA4, mediates its effects on chemoattracting macrophages, promoting phagocytosis and increasing ROS release. Receptor for cathepsin CTSG, leading to increased phagocyte chemotaxis. This Macaca mulatta (Rhesus macaque) protein is fMet-Leu-Phe receptor (FPR1).